The chain runs to 208 residues: Uracil phosphoribosyltransferase (208 aa).

5-phospho-alpha-D-ribose 1-diphosphate is bound by residues Arg78, Arg103, and 130-138 (DPMLATGGS). Uracil is bound by residues Ile193 and 198 to 200 (GDA). Asp199 is a binding site for 5-phospho-alpha-D-ribose 1-diphosphate.

This sequence belongs to the UPRTase family. It depends on Mg(2+) as a cofactor.

The enzyme catalyses UMP + diphosphate = 5-phospho-alpha-D-ribose 1-diphosphate + uracil. Its pathway is pyrimidine metabolism; UMP biosynthesis via salvage pathway; UMP from uracil: step 1/1. Allosterically activated by GTP. Its function is as follows. Catalyzes the conversion of uracil and 5-phospho-alpha-D-ribose 1-diphosphate (PRPP) to UMP and diphosphate. In Roseiflexus sp. (strain RS-1), this protein is Uracil phosphoribosyltransferase.